The following is a 125-amino-acid chain: Large ribosomal subunit protein bL12 (125 aa).

This sequence belongs to the bacterial ribosomal protein bL12 family. As to quaternary structure, homodimer. Part of the ribosomal stalk of the 50S ribosomal subunit. Forms a multimeric L10(L12)X complex, where L10 forms an elongated spine to which 2 to 4 L12 dimers bind in a sequential fashion. Binds GTP-bound translation factors.

Its function is as follows. Forms part of the ribosomal stalk which helps the ribosome interact with GTP-bound translation factors. Is thus essential for accurate translation. The chain is Large ribosomal subunit protein bL12 from Variovorax paradoxus (strain S110).